The chain runs to 498 residues: ATP synthase subunit beta, chloroplastic (498 aa).

Phosphothreonine is present on Thr-6. The residue at position 13 (Ser-13) is a Phosphoserine. Residue 172–179 (GGAGVGKT) participates in ATP binding.

Belongs to the ATPase alpha/beta chains family. In terms of assembly, F-type ATPases have 2 components, CF(1) - the catalytic core - and CF(0) - the membrane proton channel. CF(1) has five subunits: alpha(3), beta(3), gamma(1), delta(1), epsilon(1). CF(0) has four main subunits: a(1), b(1), b'(1) and c(9-12).

The protein resides in the plastid. It is found in the chloroplast thylakoid membrane. The enzyme catalyses ATP + H2O + 4 H(+)(in) = ADP + phosphate + 5 H(+)(out). In terms of biological role, produces ATP from ADP in the presence of a proton gradient across the membrane. The catalytic sites are hosted primarily by the beta subunits. This Arabis hirsuta (Hairy rock-cress) protein is ATP synthase subunit beta, chloroplastic.